Reading from the N-terminus, the 63-residue chain is Large ribosomal subunit protein uL30 (63 aa).

It belongs to the universal ribosomal protein uL30 family. Part of the 50S ribosomal subunit.

The polypeptide is Large ribosomal subunit protein uL30 (Bradyrhizobium sp. (strain ORS 278)).